The sequence spans 101 residues: Small ribosomal subunit protein uS10 (101 aa).

The protein belongs to the universal ribosomal protein uS10 family. Part of the 30S ribosomal subunit.

Functionally, involved in the binding of tRNA to the ribosomes. The polypeptide is Small ribosomal subunit protein uS10 (Corynebacterium efficiens (strain DSM 44549 / YS-314 / AJ 12310 / JCM 11189 / NBRC 100395)).